Consider the following 79-residue polypeptide: ATP synthase subunit c (79 aa).

The next 2 membrane-spanning stretches (helical) occupy residues 11–31 (IAVAIMVGLASIGAAIGIGIL) and 53–73 (FFVVMGLVDAIPMIAVGLGLY).

Belongs to the ATPase C chain family. As to quaternary structure, F-type ATPases have 2 components, F(1) - the catalytic core - and F(0) - the membrane proton channel. F(1) has five subunits: alpha(3), beta(3), gamma(1), delta(1), epsilon(1). F(0) has three main subunits: a(1), b(2) and c(10-14). The alpha and beta chains form an alternating ring which encloses part of the gamma chain. F(1) is attached to F(0) by a central stalk formed by the gamma and epsilon chains, while a peripheral stalk is formed by the delta and b chains.

The protein localises to the cell membrane. In terms of biological role, f(1)F(0) ATP synthase produces ATP from ADP in the presence of a proton or sodium gradient. F-type ATPases consist of two structural domains, F(1) containing the extramembraneous catalytic core and F(0) containing the membrane proton channel, linked together by a central stalk and a peripheral stalk. During catalysis, ATP synthesis in the catalytic domain of F(1) is coupled via a rotary mechanism of the central stalk subunits to proton translocation. Key component of the F(0) channel; it plays a direct role in translocation across the membrane. A homomeric c-ring of between 10-14 subunits forms the central stalk rotor element with the F(1) delta and epsilon subunits. The polypeptide is ATP synthase subunit c (Buchnera aphidicola subsp. Acyrthosiphon pisum (strain 5A)).